A 160-amino-acid polypeptide reads, in one-letter code: Large ribosomal subunit protein uL10 (160 aa).

It belongs to the universal ribosomal protein uL10 family. In terms of assembly, part of the ribosomal stalk of the 50S ribosomal subunit. The N-terminus interacts with L11 and the large rRNA to form the base of the stalk. The C-terminus forms an elongated spine to which L12 dimers bind in a sequential fashion forming a multimeric L10(L12)X complex.

In terms of biological role, forms part of the ribosomal stalk, playing a central role in the interaction of the ribosome with GTP-bound translation factors. The sequence is that of Large ribosomal subunit protein uL10 from Wolinella succinogenes (strain ATCC 29543 / DSM 1740 / CCUG 13145 / JCM 31913 / LMG 7466 / NCTC 11488 / FDC 602W) (Vibrio succinogenes).